The chain runs to 409 residues: Elongation factor Tu, chloroplastic (409 aa).

The 205-residue stretch at 10-214 (KPHINIGTIG…AVDAYIPTPE (205 aa)) folds into the tr-type G domain. The G1 stretch occupies residues 19–26 (GHVDHGKT). 19 to 26 (GHVDHGKT) contributes to the GTP binding site. T26 is a binding site for Mg(2+). Positions 60 to 64 (GITIN) are G2. The interval 81–84 (DCPG) is G3. GTP is bound by residues 81–85 (DCPGH) and 136–139 (NKQD). The interval 136–139 (NKQD) is G4. The G5 stretch occupies residues 174 to 176 (SRL).

This sequence belongs to the TRAFAC class translation factor GTPase superfamily. Classic translation factor GTPase family. EF-Tu/EF-1A subfamily.

It is found in the plastid. The protein localises to the chloroplast. The enzyme catalyses GTP + H2O = GDP + phosphate + H(+). Its function is as follows. GTP hydrolase that promotes the GTP-dependent binding of aminoacyl-tRNA to the A-site of ribosomes during protein biosynthesis. In Stephanocyclus meneghinianus (Diatom), this protein is Elongation factor Tu, chloroplastic (tufA).